Reading from the N-terminus, the 332-residue chain is L-lactate dehydrogenase A chain (332 aa).

Ala-2 is modified (N-acetylalanine). An N6-acetyllysine; alternate modification is found at Lys-5. An N6-succinyllysine; alternate modification is found at Lys-5. Lys-14 carries the post-translational modification N6-acetyllysine. Residue 29-57 coordinates NAD(+); the sequence is GAVGMACAISILMKELADEIALVDVMEDK. The residue at position 57 (Lys-57) is an N6-acetyllysine; alternate. Lys-57 participates in a covalent cross-link: Glycyl lysine isopeptide (Lys-Gly) (interchain with G-Cter in SUMO2); alternate. Position 81 is an N6-acetyllysine (Lys-81). Arg-99 contacts NAD(+). Arg-106 is a substrate binding site. Lys-118 bears the N6-acetyllysine; alternate mark. Lys-118 is subject to N6-succinyllysine; alternate. Position 126 is an N6-acetyllysine (Lys-126). Asn-138 lines the NAD(+) pocket. Substrate-binding residues include Asn-138 and Arg-169. His-193 acts as the Proton acceptor in catalysis. N6-acetyllysine is present on residues Lys-224 and Lys-232. Tyr-239 bears the Phosphotyrosine mark. Lys-243 carries the N6-acetyllysine modification. Residue Thr-248 participates in substrate binding. Thr-309 carries the phosphothreonine modification. Lys-318 carries the post-translational modification N6-acetyllysine; alternate. The residue at position 318 (Lys-318) is an N6-succinyllysine; alternate. Thr-322 is modified (phosphothreonine).

The protein belongs to the LDH/MDH superfamily. LDH family. In terms of assembly, homotetramer. Interacts with PTEN upstream reading frame protein MP31. Post-translationally, ISGylated.

The protein resides in the cytoplasm. The catalysed reaction is (S)-lactate + NAD(+) = pyruvate + NADH + H(+). Its pathway is fermentation; pyruvate fermentation to lactate; (S)-lactate from pyruvate: step 1/1. Functionally, interconverts simultaneously and stereospecifically pyruvate and lactate with concomitant interconversion of NADH and NAD(+). This is L-lactate dehydrogenase A chain (LDHA) from Sus scrofa (Pig).